A 405-amino-acid chain; its full sequence is Na(+)-translocating NADH-quinone reductase subunit F (405 aa).

The chain crosses the membrane as a helical span at residues 3 to 23 (IILGIVMFTVIVLVLALMILF). Residues 32-124 (GDITIKVNGE…DMDIEVPEEV (93 aa)) form the 2Fe-2S ferredoxin-type domain. [2Fe-2S] cluster is bound by residues Cys-67, Cys-73, Cys-76, and Cys-108. The FAD-binding FR-type domain maps to 127–267 (VKKWECTVIS…SGPFGEFFAK (141 aa)).

Belongs to the NqrF family. In terms of assembly, composed of six subunits; NqrA, NqrB, NqrC, NqrD, NqrE and NqrF. [2Fe-2S] cluster serves as cofactor. Requires FAD as cofactor.

It localises to the cell inner membrane. It carries out the reaction a ubiquinone + n Na(+)(in) + NADH + H(+) = a ubiquinol + n Na(+)(out) + NAD(+). Functionally, NQR complex catalyzes the reduction of ubiquinone-1 to ubiquinol by two successive reactions, coupled with the transport of Na(+) ions from the cytoplasm to the periplasm. The first step is catalyzed by NqrF, which accepts electrons from NADH and reduces ubiquinone-1 to ubisemiquinone by a one-electron transfer pathway. This chain is Na(+)-translocating NADH-quinone reductase subunit F, found in Neisseria meningitidis serogroup C / serotype 2a (strain ATCC 700532 / DSM 15464 / FAM18).